A 439-amino-acid chain; its full sequence is Xylose isomerase (439 aa).

Residues histidine 101 and aspartate 104 contribute to the active site. Mg(2+) is bound by residues glutamate 232, glutamate 268, histidine 271, aspartate 296, aspartate 307, aspartate 309, and aspartate 339.

The protein belongs to the xylose isomerase family. Homotetramer. Mg(2+) serves as cofactor.

It is found in the cytoplasm. It catalyses the reaction alpha-D-xylose = alpha-D-xylulofuranose. In Yersinia pseudotuberculosis serotype O:1b (strain IP 31758), this protein is Xylose isomerase.